Consider the following 133-residue polypeptide: Small ribosomal subunit protein bS18 (133 aa).

A disordered region spans residues 1 to 63 (MARPDMGGPK…GDEGGGRRGF (63 aa)). Over residues 9–39 (PKTGGFGGPRSGGFGGGGGGGFGGGGFGGGR) the composition is skewed to gly residues. The span at 40–59 (GGDRGDRGDRDDRGGDEGGG) shows a compositional bias: basic and acidic residues.

This sequence belongs to the bacterial ribosomal protein bS18 family. As to quaternary structure, part of the 30S ribosomal subunit. Forms a tight heterodimer with protein bS6.

Functionally, binds as a heterodimer with protein bS6 to the central domain of the 16S rRNA, where it helps stabilize the platform of the 30S subunit. This is Small ribosomal subunit protein bS18 from Anaeromyxobacter dehalogenans (strain 2CP-1 / ATCC BAA-258).